Reading from the N-terminus, the 1713-residue chain is Serine/threonine-protein kinase MRCK beta (1713 aa).

The region spanning 76–342 is the Protein kinase domain; sequence FEIIKVIGRG…IEDFKKHAFF (267 aa). ATP is bound by residues 82-90 and Lys-105; that span reads IGRGAFGEV. The active-site Proton acceptor is Asp-200. 2 positions are modified to phosphoserine; by autocatalysis: Ser-221 and Ser-233. A Phosphothreonine; by autocatalysis modification is found at Thr-239. Positions 343-413 constitute an AGC-kinase C-terminal domain; the sequence is EGLNWENIRN…TTESCFSDRG (71 aa). A Phosphothreonine modification is found at Thr-423. A coiled-coil region spans residues 434–649; that stretch reads LENSLQIEAY…ASKERKLREH (216 aa). Residues 461-485 form a disordered region; the sequence is LQESTQTVQSLHGSTRALGNSNRDK. A compositionally biased stretch (polar residues) spans 463–481; sequence ESTQTVQSLHGSTRALGNS. Omega-N-methylarginine is present on Arg-671. Coiled coils occupy residues 681–815 and 882–939; these read QEIS…AHWE and ALEA…FRAD. At Ser-927 the chain carries Phosphoserine. Phosphotyrosine is present on Tyr-954. Composition is skewed to polar residues over residues 971 to 994 and 1001 to 1014; these read ASDQETQASKLDLSPSVSVATSTE and RSQQRPSTVPLPNT. The disordered stretch occupies residues 971–1014; it reads ASDQETQASKLDLSPSVSVATSTEQQEDAARSQQRPSTVPLPNT. Residues 1026-1076 form a Phorbol-ester/DAG-type zinc finger; it reads AHQFSIKSFPSPTQCSHCTSLMVGLIRQGYACEVCAFSCHVSCKDSAPQVC. A PH domain is found at 1096-1215; sequence GTAYKGYVKV…WVGILEGLQA (120 aa). Positions 1241–1515 constitute a CNH domain; that stretch reads IKTVLAAAIV…RPLNSDGSLN (275 aa). One can recognise a CRIB domain in the interval 1585-1598; the sequence is ISNPTNFNHVAHMG. The tract at residues 1615–1713 is disordered; it reads PTAQEEKQGP…EGLDQPACDA (99 aa). Positions 1666–1677 are enriched in basic and acidic residues; sequence DFDKEPDSDSTK. 5 positions are modified to phosphoserine: Ser-1682, Ser-1684, Ser-1688, Ser-1692, and Ser-1695.

The protein belongs to the protein kinase superfamily. AGC Ser/Thr protein kinase family. DMPK subfamily. As to quaternary structure, homodimer and homotetramer via the coiled coil regions. Interacts tightly with GTP-bound but not GDP-bound CDC42. Interacts with TJP1; this interaction requires the presence of catalytically active CDC42. Forms a tripartite complex with MYO18A and LURAP1 with the latter acting as an adapter connecting CDC42BPB and MYO18A. LURAP1 binding results in activation of CDC42BPB by abolition of its negative autoregulation. Interacts with STRIP1, STRN3 and SIKE1. Interacts with CPNE4 (via VWFA domain). Interacts with LURAP1. Interacts (via AGC-kinase C-terminal domain) with FAM89B/LRAP25 (via LRR repeat). Forms a tripartite complex with FAM89B/LRAP25 and LIMK1. It depends on Mg(2+) as a cofactor. In terms of processing, proteolytically cleaved by caspases upon apoptosis induction. Expressed in all tissues examined with highest levels in lung and kidney.

It is found in the cytoplasm. It localises to the cell membrane. The protein localises to the cell junction. Its subcellular location is the cell projection. The protein resides in the lamellipodium. It carries out the reaction L-seryl-[protein] + ATP = O-phospho-L-seryl-[protein] + ADP + H(+). The enzyme catalyses L-threonyl-[protein] + ATP = O-phospho-L-threonyl-[protein] + ADP + H(+). Maintained in an inactive, closed conformation by an interaction between the kinase domain and the negative autoregulatory C-terminal coiled-coil region. Agonist binding to the phorbol ester binding site disrupts this, releasing the kinase domain to allow N-terminus-mediated dimerization and kinase activation by transautophosphorylation. Inhibited by chelerythrine chloride. Its function is as follows. Serine/threonine-protein kinase which is an important downstream effector of CDC42 and plays a role in the regulation of cytoskeleton reorganization and cell migration. Regulates actin cytoskeletal reorganization via phosphorylation of PPP1R12C and MYL9/MLC2. In concert with MYO18A and LURAP1, is involved in modulating lamellar actomyosin retrograde flow that is crucial to cell protrusion and migration. Phosphorylates PPP1R12A. In concert with FAM89B/LRAP25 mediates the targeting of LIMK1 to the lamellipodium resulting in its activation and subsequent phosphorylation of CFL1 which is important for lamellipodial F-actin regulation. The sequence is that of Serine/threonine-protein kinase MRCK beta from Rattus norvegicus (Rat).